Consider the following 338-residue polypeptide: Biotin synthase (338 aa).

Positions 50-277 (QAVQLSTLMS…KSYVRLSAGR (228 aa)) constitute a Radical SAM core domain. Cys65, Cys69, and Cys72 together coordinate [4Fe-4S] cluster. [2Fe-2S] cluster is bound by residues Cys109, Cys140, Cys200, and Arg272.

Belongs to the radical SAM superfamily. Biotin synthase family. Homodimer. [4Fe-4S] cluster is required as a cofactor. Requires [2Fe-2S] cluster as cofactor.

It catalyses the reaction (4R,5S)-dethiobiotin + (sulfur carrier)-SH + 2 reduced [2Fe-2S]-[ferredoxin] + 2 S-adenosyl-L-methionine = (sulfur carrier)-H + biotin + 2 5'-deoxyadenosine + 2 L-methionine + 2 oxidized [2Fe-2S]-[ferredoxin]. It functions in the pathway cofactor biosynthesis; biotin biosynthesis; biotin from 7,8-diaminononanoate: step 2/2. Catalyzes the conversion of dethiobiotin (DTB) to biotin by the insertion of a sulfur atom into dethiobiotin via a radical-based mechanism. In Actinobacillus succinogenes (strain ATCC 55618 / DSM 22257 / CCUG 43843 / 130Z), this protein is Biotin synthase.